A 286-amino-acid polypeptide reads, in one-letter code: Protein NipSnap homolog 2 (286 aa).

Residues 1 to 23 (MAARVLRARGAAWAGGLLQRAAP) constitute a mitochondrion transit peptide.

Belongs to the NipSnap family. In terms of assembly, interacts with CALCOCO2/NDP52, NBR1, SQSTM1/p62, TAX1BP1 and WDFY3/ALFY. Interacts with ATG8 family proteins (MAP1LC3A, MAP1LC3B, MAP1LC3C, GABARAP, GABARAPL1 and GABARAPL2). Interacts with VDAC1. In terms of tissue distribution, widely expressed. Most abundant in heart and skeletal muscle.

It localises to the mitochondrion matrix. Functionally, protein involved in mitophagy by facilitating recruitment of the autophagy machinery required for clearance of damaged mitochondria. Accumulates on the mitochondria surface in response to mitochondrial depolarization and acts as a 'eat me' signal by recruiting proteins involved in selective autophagy, such as autophagy receptors (CALCOCO2/NDP52, NBR1, SQSTM1/p62, TAX1BP1 and WDFY3/ALFY) and ATG8 family proteins (MAP1LC3A, MAP1LC3B, MAP1LC3C, GABARAP, GABARAPL1 and GABARAPL2). This is Protein NipSnap homolog 2 from Homo sapiens (Human).